The following is a 444-amino-acid chain: Cortexillin-1 (444 aa).

The actin-binding stretch occupies residues 1–227 (MAGKDWEIVQ…VLYTSLFFHA (227 aa)). Calponin-homology (CH) domains are found at residues 8–115 (IVQE…RKYR) and 124–229 (KSSE…HAYR). Coiled-coil stretches lie at residues 227 to 352 (AYRA…TRIR) and 410 to 434 (LATKLEAENLAIMKLLNQKEDDLKA).

The protein belongs to the cortexillin family. As to quaternary structure, homodimer; parallel.

The protein localises to the cytoplasm. It localises to the cytoskeleton. Actin-bundling protein. When linked to F-actin the actin filaments form preferentially anti-parallel bundles that associate into meshworks. Plays a major role in cytokinesis. Negatively regulates cortical localization of rapgap1. This chain is Cortexillin-1 (ctxA), found in Dictyostelium discoideum (Social amoeba).